The sequence spans 602 residues: ATP-dependent lipid A-core flippase 1 (602 aa).

5 consecutive transmembrane segments (helical) span residues 36–56 (LGFV…VYFL), 80–100 (LFII…NYCL), 154–174 (ILTI…MFYY), 176–196 (WQLS…VSVV), and 261–281 (ASVP…FYAI). Residues 39–321 (VAAIIGMLGY…LTNVNSEFQQ (283 aa)) enclose the ABC transmembrane type-1 domain. An ABC transporter domain is found at 362 to 599 (YKNTNTMTTS…QGAYAQLHSF (238 aa)). 398-405 (GRSGSGKS) provides a ligand contact to ATP.

The protein belongs to the ABC transporter superfamily. Lipid exporter (TC 3.A.1.106) family. In terms of assembly, homodimer.

The protein localises to the cell inner membrane. The catalysed reaction is ATP + H2O + lipid A-core oligosaccharideSide 1 = ADP + phosphate + lipid A-core oligosaccharideSide 2.. In terms of biological role, involved in lipopolysaccharide (LPS) biosynthesis. Translocates lipid A-core from the inner to the outer leaflet of the inner membrane. Transmembrane domains (TMD) form a pore in the inner membrane and the ATP-binding domain (NBD) is responsible for energy generation. The chain is ATP-dependent lipid A-core flippase 1 from Colwellia psychrerythraea (strain 34H / ATCC BAA-681) (Vibrio psychroerythus).